The following is a 289-amino-acid chain: Cyclo(L-tyrosyl-L-tyrosyl) synthase (289 aa).

A disordered region spans residues 1–48; the sequence is MSYVAAEPGVLISPTDDLQSPRSAPAAHDENADGITGGTRDDSAPNSR. Catalysis depends on Ser88, which acts as the Nucleophile. Residues Asn91, 229-233, and Tyr253 each bind substrate; that span reads YICAE.

The protein belongs to the CDPS family. As to quaternary structure, homodimer.

The enzyme catalyses 2 L-tyrosyl-tRNA(Tyr) = cyclo(L-tyrosyl-L-tyrosyl) + 2 tRNA(Tyr). Functionally, involved in the biosynthesis of mycocyclosin. It uses activated amino acids in the form of aminoacyl-tRNAs (aa-tRNAs) as substrates to catalyze the ATP-independent formation of cyclodipeptides which are intermediates in diketopiperazine (DKP) biosynthetic pathways. Catalyzes the formation of cyclo(L-Tyr-L-Tyr) (cYY) from L-tyrosyl-tRNA(Tyr). This is Cyclo(L-tyrosyl-L-tyrosyl) synthase from Mycobacterium tuberculosis (strain CDC 1551 / Oshkosh).